Reading from the N-terminus, the 276-residue chain is Dermonecrotic toxin LlSicTox-alphaIV2i (276 aa).

Residue His-5 is part of the active site. Mg(2+) is bound by residues Glu-25 and Asp-27. Catalysis depends on His-41, which acts as the Nucleophile. Disulfide bonds link Cys-45/Cys-51 and Cys-47/Cys-193. Residue Asp-85 participates in Mg(2+) binding.

The protein belongs to the arthropod phospholipase D family. Class II subfamily. The cofactor is Mg(2+). In terms of tissue distribution, expressed by the venom gland.

Its subcellular location is the secreted. The catalysed reaction is an N-(acyl)-sphingosylphosphocholine = an N-(acyl)-sphingosyl-1,3-cyclic phosphate + choline. It catalyses the reaction an N-(acyl)-sphingosylphosphoethanolamine = an N-(acyl)-sphingosyl-1,3-cyclic phosphate + ethanolamine. It carries out the reaction a 1-acyl-sn-glycero-3-phosphocholine = a 1-acyl-sn-glycero-2,3-cyclic phosphate + choline. The enzyme catalyses a 1-acyl-sn-glycero-3-phosphoethanolamine = a 1-acyl-sn-glycero-2,3-cyclic phosphate + ethanolamine. Its function is as follows. Dermonecrotic toxins cleave the phosphodiester linkage between the phosphate and headgroup of certain phospholipids (sphingolipid and lysolipid substrates), forming an alcohol (often choline) and a cyclic phosphate. This toxin acts on sphingomyelin (SM). It may also act on ceramide phosphoethanolamine (CPE), lysophosphatidylcholine (LPC) and lysophosphatidylethanolamine (LPE), but not on lysophosphatidylserine (LPS), and lysophosphatidylglycerol (LPG). It acts by transphosphatidylation, releasing exclusively cyclic phosphate products as second products. Induces dermonecrosis, hemolysis, increased vascular permeability, edema, inflammatory response, and platelet aggregation. The chain is Dermonecrotic toxin LlSicTox-alphaIV2i from Loxosceles laeta (South American recluse spider).